We begin with the raw amino-acid sequence, 434 residues long: Maintenance of mitochondrial morphology protein 1 (434 aa).

At 1–105 (MEMSELLASE…SFSSQSFAEG (105 aa)) the chain is on the lumenal side. The helical transmembrane segment at 106–126 (LIVGQLSVIVALIFVIKFFVF) threads the bilayer. At 127 to 434 (SEGGTKTATA…DDSVSVKSND (308 aa)) the chain is on the cytoplasmic side. An SMP-LTD domain is found at 194–408 (SPESLDWFNV…EPRFQFVKLP (215 aa)). Residues 415–434 (KNTRKEKTDTDDSVSVKSND) are disordered.

The protein belongs to the MMM1 family. Homodimer. Component of the ER-mitochondria encounter structure (ERMES) or MDM complex, composed of MMM1, MDM10, MDM12 and MDM34. An MMM1 homodimer associates with one molecule of MDM12 on each side in a pairwise head-to-tail manner, and the SMP-LTD domains of MMM1 and MDM12 generate a continuous hydrophobic tunnel for phospholipid trafficking.

The protein localises to the endoplasmic reticulum membrane. In terms of biological role, component of the ERMES/MDM complex, which serves as a molecular tether to connect the endoplasmic reticulum (ER) and mitochondria. Components of this complex are involved in the control of mitochondrial shape and protein biogenesis, and function in nonvesicular lipid trafficking between the ER and mitochondria. The MDM12-MMM1 subcomplex functions in the major beta-barrel assembly pathway that is responsible for biogenesis of all outer membrane beta-barrel proteins, and acts in a late step after the SAM complex. The MDM10-MDM12-MMM1 subcomplex further acts in the TOM40-specific pathway after the action of the MDM12-MMM1 complex. Essential for establishing and maintaining the structure of mitochondria and maintenance of mtDNA nucleoids. In Kluyveromyces lactis (strain ATCC 8585 / CBS 2359 / DSM 70799 / NBRC 1267 / NRRL Y-1140 / WM37) (Yeast), this protein is Maintenance of mitochondrial morphology protein 1.